Reading from the N-terminus, the 182-residue chain is Oligoribonuclease (182 aa).

The region spanning 8-171 (LIWLDMEMTG…ADIHESIGEL (164 aa)) is the Exonuclease domain. Tyr-129 is an active-site residue.

This sequence belongs to the oligoribonuclease family.

The protein resides in the cytoplasm. In terms of biological role, 3'-to-5' exoribonuclease specific for small oligoribonucleotides. The polypeptide is Oligoribonuclease (Azoarcus sp. (strain BH72)).